The sequence spans 141 residues: Large ribosomal subunit protein uL11 (141 aa).

It belongs to the universal ribosomal protein uL11 family. In terms of assembly, part of the ribosomal stalk of the 50S ribosomal subunit. Interacts with L10 and the large rRNA to form the base of the stalk. L10 forms an elongated spine to which L12 dimers bind in a sequential fashion forming a multimeric L10(L12)X complex. One or more lysine residues are methylated.

Its function is as follows. Forms part of the ribosomal stalk which helps the ribosome interact with GTP-bound translation factors. The polypeptide is Large ribosomal subunit protein uL11 (Thermotoga neapolitana (strain ATCC 49049 / DSM 4359 / NBRC 107923 / NS-E)).